The following is a 321-amino-acid chain: MSNDGKKVKSLSDLSGVGQNILNKLVEAGYSSLEAVAVATPQDLSVAAGIPQTTAQRIIKEAREALDIRFKTALEVKKERMNTKKITTGSQALDGLLGGGIETRTMTEFFGEFGSGKTQLCHQISISVQLPQEKGGLNGKAVYIDTEGTFRWERIEAMAKGAGLESDIAMNNIYYMRAINSDHQMAIVDDLQELITKDPAIKLIIVDSITSHFRAEYPGRENLAVRQQKLNKHLHQLVRLAEMYDIAVIITNQVMARPDMFYGDPTTAVGGHTLYHVPGIRVQLKKSRGNKRIARIVDAPHLPEGEVVFAITEEGVRDAEE.

An ATP-binding site is contributed by 111–118; it reads GEFGSGKT.

This sequence belongs to the eukaryotic RecA-like protein family.

Functionally, involved in DNA repair and in homologous recombination. Binds and assemble on single-stranded DNA to form a nucleoprotein filament. Hydrolyzes ATP in a ssDNA-dependent manner and promotes DNA strand exchange between homologous DNA molecules. In Sulfolobus acidocaldarius (strain ATCC 33909 / DSM 639 / JCM 8929 / NBRC 15157 / NCIMB 11770), this protein is DNA repair and recombination protein RadA.